The primary structure comprises 62 residues: Conotoxin TxIC (62 aa).

The first 22 residues, 1–22, serve as a signal peptide directing secretion; it reads MHCLPIFVILLLLTASGPSVDA. Residues 23-47 constitute a propeptide that is removed on maturation; that stretch reads QLKTKDDVPLSSFRDHAKSTLRRLQ. Cystine bridges form between Cys52/Cys58 and Cys53/Cys61. Position 60 is a 4-hydroxyproline (Pro60). Cysteine amide is present on Cys61.

Belongs to the conotoxin A superfamily. In terms of tissue distribution, expressed by the venom duct.

Its subcellular location is the secreted. This Conus textile (Cloth-of-gold cone) protein is Conotoxin TxIC.